The chain runs to 214 residues: Adenylate kinase (214 aa).

10-15 (GAGKGT) is a binding site for ATP. Residues 30–59 (STGDMFREAVASKSELGKKVEEILKRGDLV) are NMP. Residues T31, R36, 57–59 (DLV), 85–88 (GFPR), and Q92 each bind AMP. Residues 126-163 (NRRICSNCGKIYNLITLPPKVDGKCDVCGGTLYQREDD) form an LID region. R127 serves as a coordination point for ATP. Zn(2+) contacts are provided by C130 and C133. Position 136-137 (136-137 (IY)) interacts with ATP. Residues C150 and C153 each contribute to the Zn(2+) site. AMP contacts are provided by R160 and R171. L199 is an ATP binding site.

The protein belongs to the adenylate kinase family. As to quaternary structure, monomer.

It localises to the cytoplasm. It carries out the reaction AMP + ATP = 2 ADP. It functions in the pathway purine metabolism; AMP biosynthesis via salvage pathway; AMP from ADP: step 1/1. Functionally, catalyzes the reversible transfer of the terminal phosphate group between ATP and AMP. Plays an important role in cellular energy homeostasis and in adenine nucleotide metabolism. The chain is Adenylate kinase from Thermosipho africanus (strain TCF52B).